Reading from the N-terminus, the 1083-residue chain is uncharacterized protein (1083 aa).

The disordered stretch occupies residues 93–145 (SKGNLRYVPTTSRNPSNTDTYSSSIDISSSSSSINTSDDSSGKTSSNDLSDMS). The segment covering 108–145 (SNTDTYSSSIDISSSSSSINTSDDSSGKTSSNDLSDMS) has biased composition (low complexity).

The protein resides in the virion. This is an uncharacterized protein from Acanthamoeba polyphaga (Amoeba).